The following is a 72-amino-acid chain: SRY-related protein AES1 (72 aa).

Residues 1–69 constitute a DNA-binding region (HMG box); that stretch reads VKRPMNAFMV…KHMADYPDYK (69 aa).

The protein localises to the nucleus. In Alligator mississippiensis (American alligator), this protein is SRY-related protein AES1.